The primary structure comprises 156 residues: Ribonuclease pancreatic (156 aa).

A signal peptide spans 1–28; sequence MALEKSLVRLLLLVLILLVLGWVQPSLG. Basic and acidic residues predominate over residues 33–43; it reads AKKFQRQHMDS. A disordered region spans residues 33–53; that stretch reads AKKFQRQHMDSDSSPSSSSTY. Positions 35 and 38 each coordinate substrate. H40 functions as the Proton acceptor in the catalytic mechanism. Intrachain disulfides connect C54-C112, C68-C123, C86-C138, and C93-C100. A glycan (N-linked (GlcNAc...) asparagine; partial) is linked at N62. Residues 69-73 and K94 each bind substrate; that span reads KPVNT. An N-linked (GlcNAc...) asparagine glycan is attached at N104. R113 contacts substrate. N-linked (GlcNAc...) asparagine glycosylation is present at N116. Residue H147 is the Proton donor of the active site.

It belongs to the pancreatic ribonuclease family. Monomer. Interacts with and forms tight 1:1 complexes with RNH1. Dimerization of two such complexes may occur. Interaction with RNH1 inhibits this protein. In terms of processing, N-linked glycans are of complex type. In terms of tissue distribution, pancreas and other tissues and body fluids (indicating it may have other physiological functions besides its role in digestion).

It localises to the secreted. It carries out the reaction an [RNA] containing cytidine + H2O = an [RNA]-3'-cytidine-3'-phosphate + a 5'-hydroxy-ribonucleotide-3'-[RNA].. The catalysed reaction is an [RNA] containing uridine + H2O = an [RNA]-3'-uridine-3'-phosphate + a 5'-hydroxy-ribonucleotide-3'-[RNA].. Its function is as follows. Endonuclease that catalyzes the cleavage of RNA on the 3' side of pyrimidine nucleotides. Acts on single-stranded and double-stranded RNA. This is Ribonuclease pancreatic (RNASE1) from Homo sapiens (Human).